We begin with the raw amino-acid sequence, 347 residues long: Protein NDL3 (347 aa).

This sequence belongs to the NDRG family. Interacts with the heterodimers formed by GB1 and GG1, or GB1 and GG2. Interacts with RGS1.

The protein resides in the cytoplasm. Involved in a signaling pathway that modulates root auxin transport and auxin gradients. Acts partially by positively regulating the auxin carrier PIN2 and AUX1. Acts, together with GB1 as positive regulator of meristem initiation and branching. GB1 and NDL3 positively regulate basipetal inflorescence auxin transport and modulate MAX2 expression in shoots, which regulates organ and lateral meristem formation by the establishment and maintenance of auxin gradients. The polypeptide is Protein NDL3 (Arabidopsis thaliana (Mouse-ear cress)).